A 259-amino-acid chain; its full sequence is Phosphatidylglycerol--prolipoprotein diacylglyceryl transferase (259 aa).

Helical transmembrane passes span Ile-9–Ile-29, Phe-55–Tyr-75, Glu-92–Cys-112, and Ile-117–Gly-137. Arg-138 is a binding site for a 1,2-diacyl-sn-glycero-3-phospho-(1'-sn-glycerol). Helical transmembrane passes span Gln-172–Phe-192, Gly-201–Phe-221, and Ile-228–Leu-248.

This sequence belongs to the Lgt family.

It localises to the cell inner membrane. The catalysed reaction is L-cysteinyl-[prolipoprotein] + a 1,2-diacyl-sn-glycero-3-phospho-(1'-sn-glycerol) = an S-1,2-diacyl-sn-glyceryl-L-cysteinyl-[prolipoprotein] + sn-glycerol 1-phosphate + H(+). The protein operates within protein modification; lipoprotein biosynthesis (diacylglyceryl transfer). In terms of biological role, catalyzes the transfer of the diacylglyceryl group from phosphatidylglycerol to the sulfhydryl group of the N-terminal cysteine of a prolipoprotein, the first step in the formation of mature lipoproteins. This is Phosphatidylglycerol--prolipoprotein diacylglyceryl transferase from Rickettsia typhi (strain ATCC VR-144 / Wilmington).